The primary structure comprises 333 residues: G-protein coupled receptor 146 (333 aa).

Topologically, residues 1–21 (MWSCEDLNYTNSGEEQYLCNE) are extracellular. N8 is a glycosylation site (N-linked (GlcNAc...) asparagine). The chain crosses the membrane as a helical span at residues 22–42 (FHLFLFIFSVLYLIICFPVGL). At 43–65 (CYNVQLVLVNLYNKATMTMPDVY) the chain is on the cytoplasmic side. A helical membrane pass occupies residues 66–86 (FVNMAIAGLIINAVAPVYLFG). Over 87–102 (PAYTKWSLWSFGNEVY) the chain is Extracellular. The helical transmembrane segment at 103-123 (ITLLILFNVSSLVIMYSTTLL) threads the bilayer. Residues 124-146 (SLDYYIECALPRTYMSSVYNTKH) lie on the Cytoplasmic side of the membrane. Residues 147 to 167 (VCGFIWGGAVLTSFSSLLFYI) traverse the membrane as a helical segment. At 168 to 189 (CNHVSTKIIECSKMQNREAADA) the chain is on the extracellular side. The helical transmembrane segment at 190 to 210 (IMVLIGYVVPIIAVIYALVLI) threads the bilayer. Residues 211 to 234 (LQIRKEATPLDQESGRLDPSVHRL) are Cytoplasmic-facing. A helical transmembrane segment spans residues 235–255 (LIATVCTQFILWTPYYVTLLV). The Extracellular portion of the chain corresponds to 256–275 (NTFMDARVKSSNTFYIRIFQ). The helical transmembrane segment at 276-296 (FTEGLSNFLAFSSSFVLPLIH) threads the bilayer. Residues 297–333 (RHINKNFSGKLQRLLKRLHCGSQGCTHEHTVVQQVMT) lie on the Cytoplasmic side of the membrane.

It belongs to the G-protein coupled receptor 1 family.

It is found in the cell membrane. Its function is as follows. G-protein coupled receptor required for the regulation of plasma cholesterol levels. This is G-protein coupled receptor 146 (gpr146) from Xenopus laevis (African clawed frog).